A 510-amino-acid polypeptide reads, in one-letter code: Calcium-dependent lipid-binding protein (510 aa).

The chain crosses the membrane as a helical span at residues 1-21 (MGLISGILFGIIFGVALMAGW). 2 consecutive SMP-LTD domains span residues 66–248 (AFEQ…VPIG) and 66–250 (AFEQ…IGGI). Residues 226 to 488 (DDTVDTIVKD…FMGRTITGQS (263 aa)) are phospholipid binding. C2 domains follow at residues 242–362 (RIVV…ELEL) and 246–364 (PIGG…ELNL). Ca(2+) is bound by residues K278, E279, D285, D333, K334, D335, D339, and E340. Residues 390–417 (EFNKEEQMAALEDEKKIMEERKRLKEAG) are a coiled coil. The region spanning 461 to 500 (MVGSGFGAVGSGLSKAGRFMGRTITGQSSKRSGSSTPVNT) is the C2 3 domain. The interval 484 to 510 (ITGQSSKRSGSSTPVNTVPENDGAKQQ) is disordered.

It belongs to the synaptotagmin family. In terms of assembly, interacts with the biotrophic pathogenic fungi Microbotryum violaceum effector MVLG_01732. Ca(2+) is required as a cofactor. Mostly expressed in rosette leaves and flowers, to lower extent, in cauline leaves, roots and stems, and, at low levels, in siliques.

Its subcellular location is the nucleus membrane. May be involved in membrane trafficking. Acts as a repressor of abiotic stress (e.g. drought and salt) responses by binding specifically to the promoter of THAS1 to regulate its transcription. Binds to membrane lipid ceramides. In Arabidopsis thaliana (Mouse-ear cress), this protein is Calcium-dependent lipid-binding protein.